Consider the following 275-residue polypeptide: Elongation factor Ts (275 aa).

Positions 76–79 (TDFV) are involved in Mg(2+) ion dislocation from EF-Tu.

Belongs to the EF-Ts family.

The protein localises to the cytoplasm. Functionally, associates with the EF-Tu.GDP complex and induces the exchange of GDP to GTP. It remains bound to the aminoacyl-tRNA.EF-Tu.GTP complex up to the GTP hydrolysis stage on the ribosome. This is Elongation factor Ts from Corynebacterium glutamicum (strain ATCC 13032 / DSM 20300 / JCM 1318 / BCRC 11384 / CCUG 27702 / LMG 3730 / NBRC 12168 / NCIMB 10025 / NRRL B-2784 / 534).